Reading from the N-terminus, the 279-residue chain is Pantothenate synthetase (279 aa).

Position 26-33 (26-33) interacts with ATP; it reads MGNLHEGH. The active-site Proton donor is His-33. Residue Gln-57 coordinates (R)-pantoate. Gln-57 lines the beta-alanine pocket. 144–147 contributes to the ATP binding site; it reads GKKD. Gln-150 is a (R)-pantoate binding site. Residues Val-173 and 181–184 contribute to the ATP site; that span reads LSSR.

The protein belongs to the pantothenate synthetase family. As to quaternary structure, homodimer.

It is found in the cytoplasm. It catalyses the reaction (R)-pantoate + beta-alanine + ATP = (R)-pantothenate + AMP + diphosphate + H(+). Its pathway is cofactor biosynthesis; (R)-pantothenate biosynthesis; (R)-pantothenate from (R)-pantoate and beta-alanine: step 1/1. Its function is as follows. Catalyzes the condensation of pantoate with beta-alanine in an ATP-dependent reaction via a pantoyl-adenylate intermediate. In Burkholderia cenocepacia (strain HI2424), this protein is Pantothenate synthetase.